Reading from the N-terminus, the 676-residue chain is Envelope glycoprotein (676 aa).

The N-terminal stretch at 1–32 is a signal peptide; that stretch reads MGVTGILQLPRDRFKRTSFFLWVIILFQRTFS. Over 33 to 650 the chain is Extracellular; sequence IPLGVIHNST…NDNWWTGWRQ (618 aa). An N-linked (GlcNAc...) asparagine; by host glycan is attached at Asn-40. 5 disulfide bridges follow: Cys-53–Cys-609, Cys-108–Cys-135, Cys-121–Cys-147, Cys-511–Cys-556, and Cys-601–Cys-608. A receptor-binding region spans residues 54–201; it reads RDKLSSTNQL…DFFSSHPLRE (148 aa). 11 N-linked (GlcNAc...) asparagine; by host glycosylation sites follow: Asn-204, Asn-228, Asn-238, Asn-257, Asn-268, Asn-296, Asn-317, Asn-333, Asn-346, Asn-386, and Asn-413. The tract at residues 305-485 is mucin-like region; it reads ELSFTVVSNG…SGKLGLITNT (181 aa). Positions 315 to 335 are enriched in polar residues; sequence AKNISGQSPARTSSDPGTNTT. The segment at 315-337 is disordered; sequence AKNISGQSPARTSSDPGTNTTTE. Polar residues predominate over residues 373-391; it reads TSPQSLTTKPGPDNSTHNT. 2 disordered regions span residues 373–392 and 402–479; these read TSPQ…HNTP and TQVE…SGKL. Residues 414–432 show a composition bias toward low complexity; it reads DSTASDTPSATTAAGPPKA. Polar residues predominate over residues 433 to 464; that stretch reads ENTNTSKSTDFLDPATTTSPQNHSETAGNNNT. Asn-436, Asn-454, and Asn-462 each carry an N-linked (GlcNAc...) asparagine; by host glycan. The segment at 524 to 539 is fusion peptide; the sequence is GAAIGLAWIPYFGPAA. The stretch at 554–595 forms a coiled coil; the sequence is LICGLRQLANETTQALQLFLRATTELRTFSILNRKAIDFLLQ. Asn-563 carries N-linked (GlcNAc...) asparagine; by host glycosylation. A coiled-coil region spans residues 615-634; it reads WTKNITDKIDQIIHDFVDKT. A glycan (N-linked (GlcNAc...) asparagine; by host) is linked at Asn-618. Residues 651-671 traverse the membrane as a helical segment; sequence WIPAGIGVTGVIIAVIALFCI. Positions 660–664 match the Important role for host BST2/tetherin antagonism motif; that stretch reads GVIIA. Residues Cys-670 and Cys-672 are each lipidated (S-palmitoyl cysteine; by host). Topologically, residues 672–676 are cytoplasmic; sequence CKFVF.

This sequence belongs to the filoviruses glycoprotein family. In terms of assembly, homotrimer; each monomer consists of a GP1 and a GP2 subunit linked by disulfide bonds. The resulting peplomers (GP1,2) protrude from the virus surface as spikes. Interacts with host integrin alpha-V/ITGAV. Interacts with host CLEC10A. Also binds to host CD209 and CLEC4M/DC-SIGN(R). Interacts with host FOLR1. Interacts with BST2; this interaction inhibits the antiviral effect of BST2 and this allows viral release from infected cells. Interacts with host FCN1; this interaction enhances viral entry. Interacts with host TLR4; this interaction induces cell death in T-lymphocytes or proinflammatory cytokines and SOCS1 production in monocytes. Interacts with host entry receptor NPC1. As to quaternary structure, GP1 and GP2delta are part of GP1,2delta soluble complexes released by ectodomain shedding. The signal peptide region modulates GP's high mannose glycosylation, thereby determining the efficiency of the interactions with DC-SIGN(R). In terms of processing, N-glycosylated. Post-translationally, glycosylated; glycosylation is essential for the activation of dendritic cells and macrophages. O-glycosylated in the mucin-like region. In terms of processing, palmitoylation is not required for its function. Post-translationally, specific enzymatic cleavages in vivo yield mature proteins. The precursor is processed into GP1 and GP2 by host cell furin in the trans Golgi, and maybe by other host proteases, to yield the mature GP1 and GP2 proteins. The cleavage site corresponds to the furin optimal cleavage sequence [KR]-X-[KR]-R. This cleavage does not seem to be required for function. After the internalization of the virus into cell endosomes, GP1 C-terminus is removed by the endosomal proteases cathepsin B, cathepsin L, or both, leaving a 19-kDa N-terminal fragment which is further digested by cathepsin B. This cleaved 19-kDa GP1 can then bind to the host entry receptor NPC1. Proteolytic processing of GP1,2 by host ADAM17 can remove the transmembrane anchor of GP2 and leads to shedding of complexes consisting in GP1 and truncated GP2 (GP1,2delta).

It localises to the virion membrane. Its subcellular location is the host cell membrane. The protein resides in the secreted. Functionally, trimeric GP1,2 complexes form the virion surface spikes and mediate the viral entry processes, with GP1 acting as the receptor-binding subunit and GP2 as the membrane fusion subunit. At later times of infection, down-regulates the expression of various host cell surface molecules that are essential for immune surveillance and cell adhesion. Down-modulates several integrins including ITGA1, ITGA2, ITGA3, ITGA4, ITGA5, ITGA6, ITGAV and ITGB1. This decrease in cell adhesion molecules may lead to cell detachment, contributing to the disruption of blood vessel integrity and hemorrhages developed during infection (cytotoxicity). Interacts with host TLR4 and thereby stimulates the differentiation and activation of monocytes leading to bystander death of T-lymphocytes. Down-regulates as well the function of host natural killer cells. Counteracts the antiviral effect of host BST2/tetherin that restricts release of progeny virions from infected cells. However, cooperates with VP40 and host BST2 to activate canonical NF-kappa-B pathway in a manner dependent on neddylation. Its function is as follows. Functions as a decoy for anti-GP1,2 antibodies thereby contributing to viral immune evasion. Interacts and activates host macrophages and dendritic cells inducing up-regulation of cytokine transcription. This effect is mediated throught activation of host TLR4. In terms of biological role, responsible for binding to the receptor(s) on target cells. Interacts with CD209/DC-SIGN and CLEC4M/DC-SIGNR which act as cofactors for virus entry into dendritic cells (DCs) and endothelial cells. Binding to the macrophage specific lectin CLEC10A also seems to enhance virus infectivity. Interaction with FOLR1/folate receptor alpha may be a cofactor for virus entry in some cell types, although results are contradictory. Members of the Tyro3 receptor tyrosine kinase family also seem to be cell entry factors in filovirus infection. Once attached, the virions are internalized through clathrin-dependent endocytosis and/or macropinocytosis. After internalization of the virus into the endosomes of the host cell, proteolysis of GP1 by two cysteine proteases, CTSB/cathepsin B and CTSL/cathepsin L removes the glycan cap and allows GP1 binding to the host entry receptor NPC1. NPC1-binding, Ca(2+) and acidic pH induce a conformational change of GP2, which unmasks its fusion peptide and permit membranes fusion. Acts as a class I viral fusion protein. Under the current model, the protein has at least 3 conformational states: pre-fusion native state, pre-hairpin intermediate state, and post-fusion hairpin state. During viral and target cell membrane fusion, the coiled coil regions (heptad repeats) assume a trimer-of-hairpins structure, positioning the fusion peptide in close proximity to the C-terminal region of the ectodomain. The formation of this structure appears to drive apposition and subsequent fusion of viral and target cell membranes. Responsible for penetration of the virus into the cell cytoplasm by mediating the fusion of the membrane of the endocytosed virus particle with the endosomal membrane. Low pH in endosomes induces an irreversible conformational change in GP2, releasing the fusion hydrophobic peptide. The protein is Envelope glycoprotein (GP) of Epomops franqueti (Franquet's epauletted fruit bat).